The sequence spans 174 residues: FAD synthase (174 aa).

ATP contacts are provided by residues Thr34–Phe35, His39–His42, Asp119, and Tyr147.

This sequence belongs to the archaeal FAD synthase family. In terms of assembly, homodimer. Requires a divalent metal cation as cofactor.

The catalysed reaction is FMN + ATP + H(+) = FAD + diphosphate. The protein operates within cofactor biosynthesis; FAD biosynthesis; FAD from FMN: step 1/1. Its function is as follows. Catalyzes the transfer of the AMP portion of ATP to flavin mononucleotide (FMN) to produce flavin adenine dinucleotide (FAD) coenzyme. This chain is FAD synthase, found in Methanococcus voltae (strain ATCC BAA-1334 / A3).